We begin with the raw amino-acid sequence, 104 residues long: Fluoride-specific ion channel FluC 2 (104 aa).

Helical transmembrane passes span 22 to 42 (IGPY…LAAV), 48 to 68 (LVMA…STLA), and 82 to 102 (MLLG…WCGL). 2 residues coordinate Na(+): glycine 59 and serine 62.

The protein belongs to the fluoride channel Fluc/FEX (TC 1.A.43) family.

It is found in the cell membrane. It catalyses the reaction fluoride(in) = fluoride(out). Its activity is regulated as follows. Na(+) is not transported, but it plays an essential structural role and its presence is essential for fluoride channel function. In terms of biological role, fluoride-specific ion channel. Important for reducing fluoride concentration in the cell, thus reducing its toxicity. The polypeptide is Fluoride-specific ion channel FluC 2 (Corynebacterium diphtheriae (strain ATCC 700971 / NCTC 13129 / Biotype gravis)).